The primary structure comprises 142 residues: Nucleoside diphosphate kinase (142 aa).

The ATP site is built by K11, F59, R87, T93, R107, and N117. Residue H120 is the Pros-phosphohistidine intermediate of the active site.

It belongs to the NDK family. In terms of assembly, homotetramer. Requires Mg(2+) as cofactor.

It localises to the cytoplasm. It carries out the reaction a 2'-deoxyribonucleoside 5'-diphosphate + ATP = a 2'-deoxyribonucleoside 5'-triphosphate + ADP. It catalyses the reaction a ribonucleoside 5'-diphosphate + ATP = a ribonucleoside 5'-triphosphate + ADP. Its function is as follows. Major role in the synthesis of nucleoside triphosphates other than ATP. The ATP gamma phosphate is transferred to the NDP beta phosphate via a ping-pong mechanism, using a phosphorylated active-site intermediate. The sequence is that of Nucleoside diphosphate kinase from Aquifex aeolicus (strain VF5).